Consider the following 342-residue polypeptide: tRNA N6-adenosine threonylcarbamoyltransferase (342 aa).

Positions 112 and 116 each coordinate Fe cation. Substrate is bound by residues 134–138 (IVSGG), Asp167, Gly180, and Asn278. Asp306 serves as a coordination point for Fe cation.

Belongs to the KAE1 / TsaD family. Fe(2+) serves as cofactor.

It localises to the cytoplasm. The enzyme catalyses L-threonylcarbamoyladenylate + adenosine(37) in tRNA = N(6)-L-threonylcarbamoyladenosine(37) in tRNA + AMP + H(+). Its function is as follows. Required for the formation of a threonylcarbamoyl group on adenosine at position 37 (t(6)A37) in tRNAs that read codons beginning with adenine. Is involved in the transfer of the threonylcarbamoyl moiety of threonylcarbamoyl-AMP (TC-AMP) to the N6 group of A37, together with TsaE and TsaB. TsaD likely plays a direct catalytic role in this reaction. This Anaplasma phagocytophilum (strain HZ) protein is tRNA N6-adenosine threonylcarbamoyltransferase.